The primary structure comprises 437 residues: MNYTTQMDAARKGLVTKEMEAVARKEGMDIEILRERVATGKIAIPANKNHHSLDAEGIGEGLRTKINVNLGISKDCPNIEVELDKVRTALEMKAEAIMDLSSFGKTEEFRKSLIEMSPAMIGTVPIYDAVGFYDKELQDITAQEFIDVVEKHAKEGVDFVTIHAGMNQETAAVFKRNPRLTNIVSRGGSLLYAWMELNKKENPFYQYYDQLLEICEKYDVTISLGDACRPGSIHDATDASQIKELMVLGELTLRAWEKNVQVMIEGPGHMAIDEIAANMVLEKKLCHGAPFYVLGPIVTDIAPGYDHITSAIGGAIAASHGADFLCYVTPAEHLRLPTLEDMKEGIIASKIAAHAGDIAKKVPGARKWDNEMSRARQQLNWEKMFELAIDPEKARRYREESKPEHDDSCTMCGKMCSMRNMNKIMEGKNINILREDD.

Residues N69, M98, Y127, H163, 185–187 (SRG), 226–229 (DACR), and E265 each bind substrate. Residue H269 coordinates Zn(2+). Y292 provides a ligand contact to substrate. H333 is a binding site for Zn(2+). Residues C409, C412, and C416 each coordinate [4Fe-4S] cluster.

It belongs to the ThiC family. It depends on [4Fe-4S] cluster as a cofactor.

It carries out the reaction 5-amino-1-(5-phospho-beta-D-ribosyl)imidazole + S-adenosyl-L-methionine = 4-amino-2-methyl-5-(phosphooxymethyl)pyrimidine + CO + 5'-deoxyadenosine + formate + L-methionine + 3 H(+). It functions in the pathway cofactor biosynthesis; thiamine diphosphate biosynthesis. Catalyzes the synthesis of the hydroxymethylpyrimidine phosphate (HMP-P) moiety of thiamine from aminoimidazole ribotide (AIR) in a radical S-adenosyl-L-methionine (SAM)-dependent reaction. In Alkaliphilus metalliredigens (strain QYMF), this protein is Phosphomethylpyrimidine synthase.